Reading from the N-terminus, the 600-residue chain is Sulfite reductase [NADPH] flavoprotein alpha-component (600 aa).

One can recognise a Flavodoxin-like domain in the interval 63-201 (ITLISASQTG…VADQWRKQLT (139 aa)). Residues 69-74 (SQTGNA), 116-119 (STQG), and 152-161 (LGDTSYERFC) each bind FMN. Residues 235–449 (QAPLTAALAT…IEHNDNFRLP (215 aa)) form the FAD-binding FR-type domain. FAD contacts are provided by residues threonine 323, histidine 357, 387 to 390 (RLYS), 405 to 407 (TVG), tyrosine 411, and 420 to 423 (GGAS). Residues 520–521 (SR), 526–530 (KIYVQ), and aspartate 562 each bind NADP(+). Tyrosine 600 contacts FAD.

It belongs to the NADPH-dependent sulphite reductase flavoprotein subunit CysJ family. The protein in the N-terminal section; belongs to the flavodoxin family. In the C-terminal section; belongs to the flavoprotein pyridine nucleotide cytochrome reductase family. In terms of assembly, alpha(8)-beta(8). The alpha component is a flavoprotein, the beta component is a hemoprotein. FAD is required as a cofactor. It depends on FMN as a cofactor.

The enzyme catalyses hydrogen sulfide + 3 NADP(+) + 3 H2O = sulfite + 3 NADPH + 4 H(+). It participates in sulfur metabolism; hydrogen sulfide biosynthesis; hydrogen sulfide from sulfite (NADPH route): step 1/1. Functionally, component of the sulfite reductase complex that catalyzes the 6-electron reduction of sulfite to sulfide. This is one of several activities required for the biosynthesis of L-cysteine from sulfate. The flavoprotein component catalyzes the electron flow from NADPH -&gt; FAD -&gt; FMN to the hemoprotein component. The chain is Sulfite reductase [NADPH] flavoprotein alpha-component from Photorhabdus laumondii subsp. laumondii (strain DSM 15139 / CIP 105565 / TT01) (Photorhabdus luminescens subsp. laumondii).